The chain runs to 699 residues: Elongation factor G (699 aa).

The tr-type G domain maps to 8–289 (ERYRNIGISA…AVVEYMPAPT (282 aa)). GTP-binding positions include 17-24 (AHIDAGKT), 88-92 (DTPGH), and 142-145 (NKMD).

It belongs to the TRAFAC class translation factor GTPase superfamily. Classic translation factor GTPase family. EF-G/EF-2 subfamily.

The protein resides in the cytoplasm. Catalyzes the GTP-dependent ribosomal translocation step during translation elongation. During this step, the ribosome changes from the pre-translocational (PRE) to the post-translocational (POST) state as the newly formed A-site-bound peptidyl-tRNA and P-site-bound deacylated tRNA move to the P and E sites, respectively. Catalyzes the coordinated movement of the two tRNA molecules, the mRNA and conformational changes in the ribosome. In Variovorax paradoxus (strain S110), this protein is Elongation factor G.